A 206-amino-acid polypeptide reads, in one-letter code: Transmembrane emp24 domain-containing protein bai (206 aa).

The N-terminal stretch at 1–17 (MAKATFFYFLFIGYVWP) is a signal peptide. Over 18–172 (IDSVMFNLAP…RDTNEKTNSR (155 aa)) the chain is Lumenal. The GOLD domain occupies 30–140 (QKCLKEDIQA…LKPLEVDLKR (111 aa)). The chain crosses the membrane as a helical span at residues 173 to 193 (VLFFSIFSMCCLLGLATWQVL). The Cytoplasmic portion of the chain corresponds to 194–206 (YLRRYFKAKKLIE).

It belongs to the EMP24/GP25L family.

The protein localises to the membrane. Functionally, eca and bai are essential, though not redundant, for dorsoventral patterning of the embryo. Specifically required during early embryogenesis for the activity of maternal tkv, while the zygotic tkv is not affected. The chain is Transmembrane emp24 domain-containing protein bai from Drosophila persimilis (Fruit fly).